The primary structure comprises 191 residues: Protein GrpE (191 aa).

Residues 1–10 (MNHEEQKVET) show a composition bias toward basic and acidic residues. Residues 1-28 (MNHEEQKVETMEQVEAQPVEPTDVDSEV) form a disordered region.

It belongs to the GrpE family. In terms of assembly, homodimer.

It is found in the cytoplasm. In terms of biological role, participates actively in the response to hyperosmotic and heat shock by preventing the aggregation of stress-denatured proteins, in association with DnaK and GrpE. It is the nucleotide exchange factor for DnaK and may function as a thermosensor. Unfolded proteins bind initially to DnaJ; upon interaction with the DnaJ-bound protein, DnaK hydrolyzes its bound ATP, resulting in the formation of a stable complex. GrpE releases ADP from DnaK; ATP binding to DnaK triggers the release of the substrate protein, thus completing the reaction cycle. Several rounds of ATP-dependent interactions between DnaJ, DnaK and GrpE are required for fully efficient folding. This is Protein GrpE from Aeromonas salmonicida (strain A449).